Reading from the N-terminus, the 209-residue chain is Pyroglutamyl-peptidase 1 (209 aa).

Residues Glu-85, Cys-149, and His-168 contribute to the active site.

Belongs to the peptidase C15 family. As to quaternary structure, monomer.

It localises to the cytoplasm. It catalyses the reaction Release of an N-terminal pyroglutamyl group from a polypeptide, the second amino acid generally not being Pro.. Functionally, removes 5-oxoproline from various penultimate amino acid residues except L-proline. The sequence is that of Pyroglutamyl-peptidase 1 (Pgpep1) from Rattus norvegicus (Rat).